We begin with the raw amino-acid sequence, 302 residues long: Phosphoribosylaminoimidazole-succinocarboxamide synthase (302 aa).

Belongs to the SAICAR synthetase family.

It catalyses the reaction 5-amino-1-(5-phospho-D-ribosyl)imidazole-4-carboxylate + L-aspartate + ATP = (2S)-2-[5-amino-1-(5-phospho-beta-D-ribosyl)imidazole-4-carboxamido]succinate + ADP + phosphate + 2 H(+). Its pathway is purine metabolism; IMP biosynthesis via de novo pathway; 5-amino-1-(5-phospho-D-ribosyl)imidazole-4-carboxamide from 5-amino-1-(5-phospho-D-ribosyl)imidazole-4-carboxylate: step 1/2. The protein is Phosphoribosylaminoimidazole-succinocarboxamide synthase of Polaromonas sp. (strain JS666 / ATCC BAA-500).